Consider the following 1037-residue polypeptide: Presequence protease, mitochondrial (1037 aa).

The transit peptide at 1-28 (MWRCGGRQGLCVLRRLSGGHAHHRAWRW) directs the protein to the mitochondrion. Residue histidine 104 participates in Zn(2+) binding. The active-site Proton acceptor is glutamate 107. Histidine 108 contacts Zn(2+). Cysteine 119 and cysteine 556 are oxidised to a cystine. The active site involves glutamate 180. Glutamate 205 lines the Zn(2+) pocket. Position 759 is an N6-acetyllysine (lysine 759). Residue lysine 770 is modified to N6-acetyllysine; alternate. Lysine 770 bears the N6-succinyllysine; alternate mark. Positions 804–814 (GRSKKERRPVR) are enriched in basic residues. Positions 804–834 (GRSKKERRPVRPHTVEKPVPSSSGGDAHVPH) are disordered. N6-succinyllysine is present on lysine 849. Residue lysine 884 is modified to N6-acetyllysine. Lysine 946 bears the N6-succinyllysine mark.

It belongs to the peptidase M16 family. PreP subfamily. In terms of assembly, monomer and homodimer; homodimerization is induced by binding of the substrate. Zn(2+) is required as a cofactor. A disulfide bond locks the enzyme in the closed conformation preventing substrate entry into the catalytic chamber. As to expression, widely expressed. Expressed at higher level in muscle and heart compared to brain, pancreas, liver, lung and placenta.

Its subcellular location is the mitochondrion. It localises to the mitochondrion matrix. With respect to regulation, mainly exists in a closed and catalytically competent conformation but a closed-to-open switch allows substrate entry into the catalytic chamber. Substrate binding induces closure and dimerization. A disulfide bond may lock the enzyme in a closed conformation preventing substrate entry into the catalytic chamber, participating in redox regulation of the enzyme. Inhibited by metal-chelating agents. Inhibited by nickel and zinc excess, and slightly activated by manganese. Functionally, metalloendopeptidase of the mitochondrial matrix that functions in peptide cleavage and degradation rather than in protein processing. Has an ATP-independent activity. Specifically cleaves peptides in the range of 5 to 65 residues. Shows a preference for cleavage after small polar residues and before basic residues, but without any positional preference. Degrades the transit peptides of mitochondrial proteins after their cleavage. Also degrades other unstructured peptides. It is also able to degrade amyloid-beta protein 40, one of the peptides produced by APP processing, when it accumulates in mitochondrion. It is a highly efficient protease, at least toward amyloid-beta protein 40. Cleaves that peptide at a specific position and is probably not processive, releasing digested peptides intermediates that can be further cleaved subsequently. It is also able to degrade amyloid-beta protein 42. This is Presequence protease, mitochondrial from Homo sapiens (Human).